Consider the following 228-residue polypeptide: Endonuclease V (228 aa).

The Mg(2+) site is built by Asp-43 and Asp-109.

The protein belongs to the endonuclease V family. Mg(2+) serves as cofactor.

It is found in the cytoplasm. The enzyme catalyses Endonucleolytic cleavage at apurinic or apyrimidinic sites to products with a 5'-phosphate.. DNA repair enzyme involved in the repair of deaminated bases. Selectively cleaves double-stranded DNA at the second phosphodiester bond 3' to a deoxyinosine leaving behind the intact lesion on the nicked DNA. The chain is Endonuclease V from Dictyoglomus thermophilum (strain ATCC 35947 / DSM 3960 / H-6-12).